The sequence spans 423 residues: Imidazolonepropionase (423 aa).

The Fe(3+) site is built by histidine 78 and histidine 80. Zn(2+) is bound by residues histidine 78 and histidine 80. Arginine 87, tyrosine 150, and histidine 183 together coordinate 4-imidazolone-5-propanoate. Tyrosine 150 provides a ligand contact to N-formimidoyl-L-glutamate. Histidine 247 serves as a coordination point for Fe(3+). Residue histidine 247 coordinates Zn(2+). Glutamate 250 serves as a coordination point for 4-imidazolone-5-propanoate. A Fe(3+)-binding site is contributed by aspartate 322. Aspartate 322 is a binding site for Zn(2+). The N-formimidoyl-L-glutamate site is built by asparagine 324 and glycine 326. Residue serine 327 participates in 4-imidazolone-5-propanoate binding.

Belongs to the metallo-dependent hydrolases superfamily. HutI family. It depends on Zn(2+) as a cofactor. Fe(3+) serves as cofactor.

The protein localises to the cytoplasm. The enzyme catalyses 4-imidazolone-5-propanoate + H2O = N-formimidoyl-L-glutamate. It functions in the pathway amino-acid degradation; L-histidine degradation into L-glutamate; N-formimidoyl-L-glutamate from L-histidine: step 3/3. Its function is as follows. Catalyzes the hydrolytic cleavage of the carbon-nitrogen bond in imidazolone-5-propanoate to yield N-formimidoyl-L-glutamate. It is the third step in the universal histidine degradation pathway. This Bacillus anthracis (strain A0248) protein is Imidazolonepropionase.